The sequence spans 455 residues: Argininosuccinate lyase (455 aa).

It belongs to the lyase 1 family. Argininosuccinate lyase subfamily.

The protein resides in the cytoplasm. The enzyme catalyses 2-(N(omega)-L-arginino)succinate = fumarate + L-arginine. The protein operates within amino-acid biosynthesis; L-arginine biosynthesis; L-arginine from L-ornithine and carbamoyl phosphate: step 3/3. The chain is Argininosuccinate lyase from Shewanella sp. (strain ANA-3).